The sequence spans 423 residues: AP-1 complex subunit mu-1 (423 aa).

Ser2 is subject to N-acetylserine. Phosphothreonine occurs at positions 152, 154, and 223. The region spanning 168 to 421 (KNEVFLDVIE…ITQNGDYQLR (254 aa)) is the MHD domain.

Belongs to the adaptor complexes medium subunit family. As to quaternary structure, adaptor protein complex 1 (AP-1) is a heterotetramer composed of two large adaptins (gamma-type subunit AP1G1 and beta-type subunit AP1B1), a medium adaptin (mu-type subunit AP1M1 or AP1M2) and a small adaptin (sigma-type subunit AP1S1 or AP1S2 or AP1S3). Interacts with MARCHF11. Phosphorylation of membrane-bound AP1M1/AP1M2 increases its affinity for sorting signals.

The protein localises to the cytoplasmic vesicle. It is found in the clathrin-coated vesicle membrane. Its subcellular location is the golgi apparatus. In terms of biological role, subunit of clathrin-associated adaptor protein complex 1 that plays a role in protein sorting in the trans-Golgi network (TGN) and endosomes. The AP complexes mediate the recruitment of clathrin to membranes and the recognition of sorting signals within the cytosolic tails of transmembrane cargo molecules. The chain is AP-1 complex subunit mu-1 from Rattus norvegicus (Rat).